We begin with the raw amino-acid sequence, 314 residues long: Elongator complex protein 5 (314 aa).

The protein belongs to the ELP5 family. In terms of assembly, component of the elongator complex.

It is found in the cytoplasm. Its subcellular location is the nucleus. It functions in the pathway tRNA modification; 5-methoxycarbonylmethyl-2-thiouridine-tRNA biosynthesis. Component of the elongator complex, a multiprotein complex which is required for multiple tRNA modifications, including mcm5U (5-methoxycarbonylmethyl uridine), mcm5s2U (5-methoxycarbonylmethyl-2-thiouridine), and ncm5U (5-carbamoylmethyl uridine). The elongator complex catalyzes formation of carboxymethyluridine in the wobble base at position 34 in tRNAs. This chain is Elongator complex protein 5 (iki1), found in Schizosaccharomyces pombe (strain 972 / ATCC 24843) (Fission yeast).